We begin with the raw amino-acid sequence, 487 residues long: UDP-N-acetylmuramate--L-alanine ligase (487 aa).

ATP is bound at residue 130-136 (GTHGKTT).

It belongs to the MurCDEF family.

It is found in the cytoplasm. The catalysed reaction is UDP-N-acetyl-alpha-D-muramate + L-alanine + ATP = UDP-N-acetyl-alpha-D-muramoyl-L-alanine + ADP + phosphate + H(+). The protein operates within cell wall biogenesis; peptidoglycan biosynthesis. In terms of biological role, cell wall formation. This chain is UDP-N-acetylmuramate--L-alanine ligase, found in Photobacterium profundum (strain SS9).